The sequence spans 359 residues: Protein mab-21-like 2 (359 aa).

Belongs to the mab-21 family.

The protein resides in the nucleus. It localises to the cytoplasm. In terms of biological role, required for several aspects of embryonic development including normal development of the eye. This is Protein mab-21-like 2 (MAB21L2) from Homo sapiens (Human).